Reading from the N-terminus, the 264-residue chain is uncharacterized protein (264 aa).

The next 6 membrane-spanning stretches (helical) occupy residues 1 to 21 (MLLG…SVSL), 43 to 63 (FFGV…NGFV), 95 to 115 (VVGL…LSSL), 146 to 166 (IATW…LGGL), 181 to 201 (GWLA…QPFV), and 215 to 235 (IVAN…MFFP).

It to M.pneumoniae MPN_308 C-terminal region.

The protein resides in the cell membrane. This is an uncharacterized protein from Mycoplasma pneumoniae (strain ATCC 29342 / M129 / Subtype 1) (Mycoplasmoides pneumoniae).